A 58-amino-acid chain; its full sequence is UPF0391 membrane protein Sbal195_1447 (58 aa).

2 helical membrane passes run 6–26 (LVFLVVAVIAGLLGFTGIAGA) and 28–48 (AGIAKIIFFVFIVLLVISLLV).

The protein belongs to the UPF0391 family.

The protein resides in the cell membrane. The chain is UPF0391 membrane protein Sbal195_1447 from Shewanella baltica (strain OS195).